The following is a 230-amino-acid chain: Cytochrome c oxidase subunit 2 (230 aa).

Residues 1 to 14 lie on the Mitochondrial intermembrane side of the membrane; it reads MAHPSQLGFQDAAS. A helical membrane pass occupies residues 15–45; that stretch reads PVMEELIHFHDHTLMIVFLISTLVLYIITAM. At 46-59 the chain is on the mitochondrial matrix side; that stretch reads VSTKLTNKYILDSQ. The chain crosses the membrane as a helical span at residues 60-87; that stretch reads EIEIVWTILPAIILIMIALPSLRILYLM. The Mitochondrial intermembrane portion of the chain corresponds to 88 to 230; it reads DEINDPHLTI…TWSSLMLEEA (143 aa). The Cu cation site is built by His161, Cys196, Glu198, Cys200, His204, and Met207. Glu198 contacts Mg(2+).

The protein belongs to the cytochrome c oxidase subunit 2 family. Component of the cytochrome c oxidase (complex IV, CIV), a multisubunit enzyme composed of 14 subunits. The complex is composed of a catalytic core of 3 subunits MT-CO1, MT-CO2 and MT-CO3, encoded in the mitochondrial DNA, and 11 supernumerary subunits COX4I, COX5A, COX5B, COX6A, COX6B, COX6C, COX7A, COX7B, COX7C, COX8 and NDUFA4, which are encoded in the nuclear genome. The complex exists as a monomer or a dimer and forms supercomplexes (SCs) in the inner mitochondrial membrane with NADH-ubiquinone oxidoreductase (complex I, CI) and ubiquinol-cytochrome c oxidoreductase (cytochrome b-c1 complex, complex III, CIII), resulting in different assemblies (supercomplex SCI(1)III(2)IV(1) and megacomplex MCI(2)III(2)IV(2)). Found in a complex with TMEM177, COA6, COX18, COX20, SCO1 and SCO2. Interacts with TMEM177 in a COX20-dependent manner. Interacts with COX20. Interacts with COX16. Cu cation is required as a cofactor.

It localises to the mitochondrion inner membrane. The enzyme catalyses 4 Fe(II)-[cytochrome c] + O2 + 8 H(+)(in) = 4 Fe(III)-[cytochrome c] + 2 H2O + 4 H(+)(out). Component of the cytochrome c oxidase, the last enzyme in the mitochondrial electron transport chain which drives oxidative phosphorylation. The respiratory chain contains 3 multisubunit complexes succinate dehydrogenase (complex II, CII), ubiquinol-cytochrome c oxidoreductase (cytochrome b-c1 complex, complex III, CIII) and cytochrome c oxidase (complex IV, CIV), that cooperate to transfer electrons derived from NADH and succinate to molecular oxygen, creating an electrochemical gradient over the inner membrane that drives transmembrane transport and the ATP synthase. Cytochrome c oxidase is the component of the respiratory chain that catalyzes the reduction of oxygen to water. Electrons originating from reduced cytochrome c in the intermembrane space (IMS) are transferred via the dinuclear copper A center (CU(A)) of subunit 2 and heme A of subunit 1 to the active site in subunit 1, a binuclear center (BNC) formed by heme A3 and copper B (CU(B)). The BNC reduces molecular oxygen to 2 water molecules using 4 electrons from cytochrome c in the IMS and 4 protons from the mitochondrial matrix. In Scyliorhinus canicula (Small-spotted catshark), this protein is Cytochrome c oxidase subunit 2 (MT-CO2).